The chain runs to 586 residues: Glutathione/L-cysteine transport system ATP-binding/permease protein CydD (586 aa).

A run of 6 helical transmembrane segments spans residues 28-48 (IVLATLSSFILVAQTYFLATL), 62-82 (LIPYFLGLIIGFGMRAIILWA), 146-166 (LSAIVPVVIFIAVFPLNWAAG), 167-187 (LILMITAPLVPLFMIIVGIAA), 250-270 (SAVLEFFTSISIALMAVYFGF), and 278-298 (FGTYNAPLTLFTGFFCLILAP). An ABC transmembrane type-1 domain is found at 28–316 (IVLATLSSFI…LGTYYHDRAA (289 aa)). One can recognise an ABC transporter domain in the interval 350–581 (ISAENLVVLS…GFFAELLAQR (232 aa)). 383–390 (GQSGAGKT) contacts ATP.

The protein belongs to the ABC transporter superfamily. Cysteine exporter (TC 3.A.1.129.1) family. In terms of assembly, forms a heterodimer with CydC.

It is found in the cell inner membrane. It catalyses the reaction L-cysteine(in) + ATP + H2O = L-cysteine(out) + ADP + phosphate + H(+). It carries out the reaction glutathione(in) + ATP + H2O = glutathione(out) + ADP + phosphate + H(+). Part of the ABC transporter complex CydDC that exports the reduced low-molecular-weight thiols cysteine and glutathione to the periplasm. Export of these thiol-containing redox-active molecules may be crucial for redox homeostasis in the periplasm, permitting correct assembly of various respiratory complexes and formation of correct disulfide bonds in periplasmic and secreted proteins. CydD contains transmembrane domains (TMD), which form a pore in the inner membrane, and an ATP-binding domain (NBD), which is responsible for energy generation. Required for the assembly of functional cytochrome bd-type quinol oxidases and periplasmic c-type cytochromes. The protein is Glutathione/L-cysteine transport system ATP-binding/permease protein CydD (cydD) of Haemophilus influenzae (strain ATCC 51907 / DSM 11121 / KW20 / Rd).